Here is a 426-residue protein sequence, read N- to C-terminus: Glutamate-1-semialdehyde 2,1-aminomutase (426 aa).

Lys-265 is subject to N6-(pyridoxal phosphate)lysine.

Belongs to the class-III pyridoxal-phosphate-dependent aminotransferase family. HemL subfamily. As to quaternary structure, homodimer. The cofactor is pyridoxal 5'-phosphate.

The protein resides in the cytoplasm. The enzyme catalyses (S)-4-amino-5-oxopentanoate = 5-aminolevulinate. Its pathway is porphyrin-containing compound metabolism; protoporphyrin-IX biosynthesis; 5-aminolevulinate from L-glutamyl-tRNA(Glu): step 2/2. This chain is Glutamate-1-semialdehyde 2,1-aminomutase, found in Akkermansia muciniphila (strain ATCC BAA-835 / DSM 22959 / JCM 33894 / BCRC 81048 / CCUG 64013 / CIP 107961 / Muc).